The following is a 384-amino-acid chain: D-galactosamine-6-phosphate deaminase AgaS (384 aa).

SIS domains lie at 45 to 197 and 215 to 364; these read LEPL…SQTF and SEGV…PDTP.

This sequence belongs to the SIS family. AgaS subfamily.

The enzyme catalyses D-galactosamine 6-phosphate + H2O = D-tagatopyranose 1-phosphate + NH4(+). Its function is as follows. Catalyzes the isomerization-deamination of galactosamine 6-phosphate to form tagatofuranose 6-phosphate and ammonium ion. The chain is D-galactosamine-6-phosphate deaminase AgaS from Escherichia coli O157:H7.